A 75-amino-acid chain; its full sequence is Small ribosomal subunit protein eS17 (75 aa).

The protein belongs to the eukaryotic ribosomal protein eS17 family.

The sequence is that of Small ribosomal subunit protein eS17 from Thermoplasma volcanium (strain ATCC 51530 / DSM 4299 / JCM 9571 / NBRC 15438 / GSS1).